The following is a 231-amino-acid chain: Ribose-5-phosphate isomerase A (231 aa).

Residues T28–T31, D83–D86, and K96–G99 each bind substrate. The Proton acceptor role is filled by E105. Substrate is bound at residue K123.

Belongs to the ribose 5-phosphate isomerase family. In terms of assembly, homodimer.

The enzyme catalyses aldehydo-D-ribose 5-phosphate = D-ribulose 5-phosphate. Its pathway is carbohydrate degradation; pentose phosphate pathway; D-ribose 5-phosphate from D-ribulose 5-phosphate (non-oxidative stage): step 1/1. Catalyzes the reversible conversion of ribose-5-phosphate to ribulose 5-phosphate. The chain is Ribose-5-phosphate isomerase A from Agrobacterium fabrum (strain C58 / ATCC 33970) (Agrobacterium tumefaciens (strain C58)).